The chain runs to 250 residues: Bis(5'-nucleosyl)-tetraphosphatase PrpE [asymmetrical] (250 aa).

The protein belongs to the PrpE family. The cofactor is Ni(2+).

The catalysed reaction is P(1),P(4)-bis(5'-guanosyl) tetraphosphate + H2O = GMP + GTP + 2 H(+). Functionally, asymmetrically hydrolyzes Ap4p to yield AMP and ATP. The protein is Bis(5'-nucleosyl)-tetraphosphatase PrpE [asymmetrical] of Oceanobacillus iheyensis (strain DSM 14371 / CIP 107618 / JCM 11309 / KCTC 3954 / HTE831).